Reading from the N-terminus, the 217-residue chain is Adapter protein MecA (217 aa).

The protein belongs to the MecA family. As to quaternary structure, homodimer.

Its function is as follows. Enables the recognition and targeting of unfolded and aggregated proteins to the ClpC protease or to other proteins involved in proteolysis. Acts negatively in the development of competence by binding ComK and recruiting it to the ClpCP protease. When overexpressed, inhibits sporulation. Also involved in Spx degradation by ClpC. This is Adapter protein MecA from Alkalihalophilus pseudofirmus (strain ATCC BAA-2126 / JCM 17055 / OF4) (Bacillus pseudofirmus).